The following is a 367-amino-acid chain: Serine/threonine-protein kinase-transforming protein Rmil (367 aa).

The disordered stretch occupies residues 1–64 (EGGSTAGLSA…DSSDDWEIPD (64 aa)). The segment covering 33–57 (QRERKSSSSSEDRNRMKTLGRRDSS) has biased composition (basic and acidic residues). In terms of domain architecture, Protein kinase spans 67 to 327 (ITVGQRIGSG…PQILASIELL (261 aa)). Residues 73–81 (IGSGSFGTV) and Lys-93 contribute to the ATP site. Asp-186 acts as the Proton acceptor in catalysis.

This sequence belongs to the protein kinase superfamily. TKL Ser/Thr protein kinase family. RAF subfamily.

It catalyses the reaction L-seryl-[protein] + ATP = O-phospho-L-seryl-[protein] + ADP + H(+). The enzyme catalyses L-threonyl-[protein] + ATP = O-phospho-L-threonyl-[protein] + ADP + H(+). The chain is Serine/threonine-protein kinase-transforming protein Rmil (V-RMIL) from Avian retrovirus IC10.